A 648-amino-acid polypeptide reads, in one-letter code: cAMP-dependent protein kinase catalytic subunit (648 aa).

Composition is skewed to low complexity over residues 1–20 (MSNS…TINN), 46–67 (SGNN…NSSG), 136–175 (QQQP…PQQQ), and 232–254 (NTPS…NPHT). 4 disordered regions span residues 1–25 (MSNS…KVNV), 40–86 (GGGG…TKMD), 121–175 (KVPS…PQQQ), and 219–290 (QQQQ…DTNP). Over residues 255 to 290 (SGLSLQHAHSSYTPSNVLHSPTHFQSSLPTRLDTNP) the composition is skewed to polar residues. The 255-residue stretch at 336-590 (FKQIRVIGTG…ALDVKNHRWF (255 aa)) folds into the Protein kinase domain. Residues 342–350 (IGTGTFGKV) and lysine 365 contribute to the ATP site. Aspartate 459 serves as the catalytic Proton acceptor. The residue at position 490 (threonine 490) is a Phosphothreonine. The AGC-kinase C-terminal domain occupies 591 to 648 (SDINWERLYQRRDNGPFIPKIQHQGDSSNFEMYDEEEMVEEPPSSNYVDPYAHLFKDF).

Belongs to the protein kinase superfamily. AGC Ser/Thr protein kinase family. cAMP subfamily. In Dictyostelium the holoenzyme is a dimer composed of a regulatory (R) and a catalytic (C) subunit. In the presence of cAMP it dissociates into the active C subunit and an R monomer.

The enzyme catalyses L-seryl-[protein] + ATP = O-phospho-L-seryl-[protein] + ADP + H(+). It catalyses the reaction L-threonyl-[protein] + ATP = O-phospho-L-threonyl-[protein] + ADP + H(+). Functionally, essential for differentiation and fruit morphogenesis. This is cAMP-dependent protein kinase catalytic subunit (pkaC) from Dictyostelium discoideum (Social amoeba).